The chain runs to 1048 residues: Ceruloplasmin (1048 aa).

Positions 1–19 are cleaved as a signal peptide; the sequence is MKIFLLCIFLILCGTSVWA. Plastocyanin-like domains lie at 20–200, 209–357, and 370–554; these read KDKH…LIHC, KEKN…VQDC, and NVRH…MKIC. Na(+)-binding residues include Y55, G64, and Y67. 2 residues coordinate Cu(2+): H120 and H122. H120 serves as a coordination point for O2. Residue K128 coordinates Ca(2+). The N-linked (GlcNAc...) asparagine glycan is linked to N138. Ca(2+) is bound by residues Q143, D146, and D147. An intrachain disulfide couples C174 to C200. 2 residues coordinate Cu(2+): H180 and H182. H180 is a binding site for O2. N-linked (GlcNAc...) asparagine glycosylation is present at N227. Na(+) is bound at residue S256. C276 and C357 are oxidised to a cystine. Positions 295, 338, and 343 each coordinate Cu(2+). 3 residues coordinate Na(+): F408, G417, and Y420. C530 and C554 are joined by a disulfide. Residues N556 and N582 are each glycosylated (N-linked (GlcNAc...) asparagine). A Plastocyanin-like 4 domain is found at 564-712; the sequence is RLKNVDKEFY…MKQKYTVSQC (149 aa). A Na(+)-binding site is contributed by S611. C631 and C712 are oxidised to a cystine. Cu(2+) is bound by residues H650, C693, H698, and M703. The active-site Nucleophile; for glutathione peroxidase activity is C693. S716 is subject to Phosphoserine. 2 consecutive Plastocyanin-like domains span residues 724 to 894 and 902 to 1044; these read GERT…LIVC and SNPI…PNEE. Residue N756 is glycosylated (N-linked (GlcNAc...) asparagine). F761, G770, and Y773 together coordinate Na(+). C868 and C894 are joined by a disulfide. An N-linked (GlcNAc...) asparagine glycan is attached at N920. A Na(+)-binding site is contributed by S949. Residues H977, H980, H982, H1022, C1023, H1024, H1028, and M1033 each contribute to the Cu(2+) site. The O2 site is built by H980 and H982. Residue H1024 coordinates O2.

It belongs to the multicopper oxidase family. Found in a complex with MPO and LTF; interacts directly with MPO and LTF, which allows Fe(3+) incorporation into LTF, activation of CP ferroxidase activity and protection of CP antioxidant properties by MPO. Requires Cu(2+) as cofactor. In terms of tissue distribution, expressed by the liver and secreted in plasma. Also expressed in the hypothalamus, spleen and uterus. No expression in the cortex, heart, intestine or kidney.

The protein localises to the secreted. It catalyses the reaction 4 Fe(2+) + O2 + 4 H(+) = 4 Fe(3+) + 2 H2O. It carries out the reaction 4 Cu(+) + O2 + 4 H(+) = 4 Cu(2+) + 2 H2O. The catalysed reaction is a hydroperoxide + 2 glutathione = an alcohol + glutathione disulfide + H2O. The enzyme catalyses 4 nitric oxide + O2 + 2 H2O = 4 nitrite + 4 H(+). It catalyses the reaction 2 glutathione + H2O2 = glutathione disulfide + 2 H2O. Functionally, multifunctional blue, copper-binding (6-7 atoms per molecule) glycoprotein. It has ferroxidase activity oxidizing Fe(2+) to Fe(3+) without releasing radical oxygen species. It is involved in iron transport across the cell membrane. Copper ions provide a large number of enzymatic activites. Oxidizes highly toxic ferrous ions to the ferric state for further incorporation onto apo-transferrins, catalyzes Cu(+) oxidation and promotes the oxidation of biogenic amines such as norepinephrin and serotonin. Provides Cu(2+) ions for the ascorbate-mediated deaminase degradation of the heparan sulfate chains of GPC1. Has glutathione peroxidase-like activity, can remove both hydrogen peroxide and lipid hydroperoxide in the presence of thiols. Also shows NO-oxidase and NO2 synthase activities that determine endocrine NO homeostasis. The polypeptide is Ceruloplasmin (CP) (Ovis aries (Sheep)).